The sequence spans 179 residues: Large ribosomal subunit protein uL5 (179 aa).

The protein belongs to the universal ribosomal protein uL5 family. As to quaternary structure, part of the 50S ribosomal subunit; part of the 5S rRNA/L5/L18/L25 subcomplex. Contacts the 5S rRNA and the P site tRNA. Forms a bridge to the 30S subunit in the 70S ribosome.

This is one of the proteins that bind and probably mediate the attachment of the 5S RNA into the large ribosomal subunit, where it forms part of the central protuberance. In the 70S ribosome it contacts protein S13 of the 30S subunit (bridge B1b), connecting the 2 subunits; this bridge is implicated in subunit movement. Contacts the P site tRNA; the 5S rRNA and some of its associated proteins might help stabilize positioning of ribosome-bound tRNAs. The polypeptide is Large ribosomal subunit protein uL5 (Desulfosudis oleivorans (strain DSM 6200 / JCM 39069 / Hxd3) (Desulfococcus oleovorans)).